Consider the following 329-residue polypeptide: 4-hydroxy-3-methylbut-2-enyl diphosphate reductase 1 (329 aa).

[4Fe-4S] cluster is bound at residue C29. H58 and H95 together coordinate (2E)-4-hydroxy-3-methylbut-2-enyl diphosphate. Dimethylallyl diphosphate contacts are provided by H58 and H95. Isopentenyl diphosphate is bound by residues H58 and H95. C117 is a binding site for [4Fe-4S] cluster. H145 is a binding site for (2E)-4-hydroxy-3-methylbut-2-enyl diphosphate. H145 provides a ligand contact to dimethylallyl diphosphate. H145 contributes to the isopentenyl diphosphate binding site. E147 acts as the Proton donor in catalysis. T185 is a (2E)-4-hydroxy-3-methylbut-2-enyl diphosphate binding site. C215 provides a ligand contact to [4Fe-4S] cluster. Residues S243, S244, N245, and S287 each contribute to the (2E)-4-hydroxy-3-methylbut-2-enyl diphosphate site. The dimethylallyl diphosphate site is built by S243, S244, N245, and S287. Isopentenyl diphosphate is bound by residues S243, S244, N245, and S287.

Belongs to the IspH family. [4Fe-4S] cluster serves as cofactor.

The catalysed reaction is isopentenyl diphosphate + 2 oxidized [2Fe-2S]-[ferredoxin] + H2O = (2E)-4-hydroxy-3-methylbut-2-enyl diphosphate + 2 reduced [2Fe-2S]-[ferredoxin] + 2 H(+). It catalyses the reaction dimethylallyl diphosphate + 2 oxidized [2Fe-2S]-[ferredoxin] + H2O = (2E)-4-hydroxy-3-methylbut-2-enyl diphosphate + 2 reduced [2Fe-2S]-[ferredoxin] + 2 H(+). The protein operates within isoprenoid biosynthesis; dimethylallyl diphosphate biosynthesis; dimethylallyl diphosphate from (2E)-4-hydroxy-3-methylbutenyl diphosphate: step 1/1. Its pathway is isoprenoid biosynthesis; isopentenyl diphosphate biosynthesis via DXP pathway; isopentenyl diphosphate from 1-deoxy-D-xylulose 5-phosphate: step 6/6. Catalyzes the conversion of 1-hydroxy-2-methyl-2-(E)-butenyl 4-diphosphate (HMBPP) into a mixture of isopentenyl diphosphate (IPP) and dimethylallyl diphosphate (DMAPP). Acts in the terminal step of the DOXP/MEP pathway for isoprenoid precursor biosynthesis. The sequence is that of 4-hydroxy-3-methylbut-2-enyl diphosphate reductase 1 from Mycobacterium tuberculosis (strain CDC 1551 / Oshkosh).